Here is a 564-residue protein sequence, read N- to C-terminus: 2-succinyl-5-enolpyruvyl-6-hydroxy-3-cyclohexene-1-carboxylate synthase (564 aa).

It belongs to the TPP enzyme family. MenD subfamily. As to quaternary structure, homodimer. Mg(2+) is required as a cofactor. The cofactor is Mn(2+). It depends on thiamine diphosphate as a cofactor.

It catalyses the reaction isochorismate + 2-oxoglutarate + H(+) = 5-enolpyruvoyl-6-hydroxy-2-succinyl-cyclohex-3-ene-1-carboxylate + CO2. The protein operates within quinol/quinone metabolism; 1,4-dihydroxy-2-naphthoate biosynthesis; 1,4-dihydroxy-2-naphthoate from chorismate: step 2/7. Its pathway is quinol/quinone metabolism; menaquinone biosynthesis. Functionally, catalyzes the thiamine diphosphate-dependent decarboxylation of 2-oxoglutarate and the subsequent addition of the resulting succinic semialdehyde-thiamine pyrophosphate anion to isochorismate to yield 2-succinyl-5-enolpyruvyl-6-hydroxy-3-cyclohexene-1-carboxylate (SEPHCHC). In Vibrio vulnificus (strain CMCP6), this protein is 2-succinyl-5-enolpyruvyl-6-hydroxy-3-cyclohexene-1-carboxylate synthase.